Reading from the N-terminus, the 901-residue chain is Alpha-actinin-3 (901 aa).

Position 1 is an N-acetylmethionine (Met1). Residues 1–261 (MMMVMQPEGL…IMTYVSCFYH (261 aa)) form an actin-binding region. 2 consecutive Calponin-homology (CH) domains span residues 45 to 149 (KQQR…LRFA) and 158 to 264 (TSAK…HAFA). Spectrin repeat units lie at residues 288-398 (KLME…WLLS), 408-513 (HLAE…ALER), 523-634 (RLQL…TLQE), and 644-747 (RLRR…EVEN). EF-hand domains are found at residues 760–795 (EQLN…MGYD) and 796–831 (LGEV…ETAE). The Ca(2+) site is built by Asp773, Asn777, Met779, Asp784, Asp809, and Asn811.

Belongs to the alpha-actinin family. In terms of assembly, homodimer; antiparallel. Also forms heterodimers with ACTN2. Interacts with MYOZ1. Expression restricted to fast (type 2) skeletal muscle fibers (at protein level).

Its function is as follows. F-actin cross-linking protein which is thought to anchor actin to a variety of intracellular structures. This is a bundling protein. The polypeptide is Alpha-actinin-3 (ACTN3) (Homo sapiens (Human)).